A 173-amino-acid polypeptide reads, in one-letter code: Adenine phosphoribosyltransferase (173 aa).

The protein belongs to the purine/pyrimidine phosphoribosyltransferase family. Homodimer.

It localises to the cytoplasm. The enzyme catalyses AMP + diphosphate = 5-phospho-alpha-D-ribose 1-diphosphate + adenine. It functions in the pathway purine metabolism; AMP biosynthesis via salvage pathway; AMP from adenine: step 1/1. Its function is as follows. Catalyzes a salvage reaction resulting in the formation of AMP, that is energically less costly than de novo synthesis. The chain is Adenine phosphoribosyltransferase from Solibacter usitatus (strain Ellin6076).